A 184-amino-acid polypeptide reads, in one-letter code: ATP-dependent 6-phosphofructokinase (184 aa).

An N-terminal catalytic PFK domain 1 region spans residues 1–184 (GGDGSLTGAN…TRTTVLGHIQ (184 aa)). Position 2–5 (2–5 (GDGS)) interacts with ATP. Asp3 contacts Mg(2+). Residues 48–50 (SID), Arg85, 92–94 (MGR), Glu148, Arg176, and 182–184 (HIQ) contribute to the substrate site. The active-site Proton acceptor is Asp50.

The protein belongs to the phosphofructokinase type A (PFKA) family. ATP-dependent PFK group I subfamily. Eukaryotic two domain clade 'E' sub-subfamily. In terms of assembly, homotetramer. Requires Mg(2+) as cofactor.

It localises to the cytoplasm. It carries out the reaction beta-D-fructose 6-phosphate + ATP = beta-D-fructose 1,6-bisphosphate + ADP + H(+). It functions in the pathway carbohydrate degradation; glycolysis; D-glyceraldehyde 3-phosphate and glycerone phosphate from D-glucose: step 3/4. With respect to regulation, allosterically activated by ADP, AMP, or fructose 2,6-bisphosphate, and allosterically inhibited by ATP or citrate. In terms of biological role, catalyzes the phosphorylation of D-fructose 6-phosphate to fructose 1,6-bisphosphate by ATP, the first committing step of glycolysis. The sequence is that of ATP-dependent 6-phosphofructokinase (PFK) from Calanus finmarchicus (Calanus tonsus).